The following is an 804-amino-acid chain: Protein translocase subunit SecA (804 aa).

ATP-binding positions include Q100, 118–122 (GEGKT), and D508.

It belongs to the SecA family. Monomer and homodimer. Part of the essential Sec protein translocation apparatus which comprises SecA, SecYEG and auxiliary proteins SecDF. Other proteins may also be involved.

Its subcellular location is the cell membrane. It localises to the cytoplasm. It catalyses the reaction ATP + H2O + cellular proteinSide 1 = ADP + phosphate + cellular proteinSide 2.. In terms of biological role, part of the Sec protein translocase complex. Interacts with the SecYEG preprotein conducting channel. Has a central role in coupling the hydrolysis of ATP to the transfer of proteins into and across the cell membrane, serving as an ATP-driven molecular motor driving the stepwise translocation of polypeptide chains across the membrane. The polypeptide is Protein translocase subunit SecA (Leuconostoc citreum (strain KM20)).